The following is a 230-amino-acid chain: Potassium/proton antiporter CemA (230 aa).

The next 4 helical transmembrane spans lie at 7 to 27, 106 to 126, 145 to 165, and 181 to 201; these read LPSL…SSSF, IILH…SFFL, LNDS…VGFH, and FGWA…PVIL.

Belongs to the CemA family.

It is found in the plastid. Its subcellular location is the chloroplast inner membrane. It catalyses the reaction K(+)(in) + H(+)(out) = K(+)(out) + H(+)(in). Its function is as follows. Contributes to K(+)/H(+) antiport activity by supporting proton efflux to control proton extrusion and homeostasis in chloroplasts in a light-dependent manner to modulate photosynthesis. Prevents excessive induction of non-photochemical quenching (NPQ) under continuous-light conditions. Indirectly promotes efficient inorganic carbon uptake into chloroplasts. This is Potassium/proton antiporter CemA from Hordeum vulgare (Barley).